The chain runs to 416 residues: Fusaric acid cluster transcription factor FUB10 (416 aa).

Residues 16–47 (CDRCRAQKLRCHRDSGHSTDACLRCLKSGIEC) constitute a DNA-binding region (zn(2)-C6 fungal-type). The interval 50 to 92 (SKARPTGRPPSRQVQPTVSVEQGDTSSSSHTTDSSPSAGGTDI) is disordered. A compositionally biased stretch (polar residues) spans 61 to 73 (RQVQPTVSVEQGD). Residues 74-86 (TSSSSHTTDSSPS) are compositionally biased toward low complexity.

The protein localises to the nucleus. Functionally, transcription factor that regulates the expression of the gene cluster that mediates the biosynthesis of fusaric acid, a mycotoxin with low to moderate toxicity to animals and humans, but with high phytotoxic properties. The chain is Fusaric acid cluster transcription factor FUB10 from Fusarium oxysporum f. sp. lycopersici (strain 4287 / CBS 123668 / FGSC 9935 / NRRL 34936) (Fusarium vascular wilt of tomato).